Here is a 223-residue protein sequence, read N- to C-terminus: Pyridoxal phosphate homeostasis protein (223 aa).

Lys36 is subject to N6-(pyridoxal phosphate)lysine.

This sequence belongs to the pyridoxal phosphate-binding protein YggS/PROSC family. As to quaternary structure, monomer.

Functionally, pyridoxal 5'-phosphate (PLP)-binding protein, which is involved in PLP homeostasis. In Buchnera aphidicola subsp. Baizongia pistaciae (strain Bp), this protein is Pyridoxal phosphate homeostasis protein.